Consider the following 460-residue polypeptide: Flavonol 3-O-glucosyltransferase (460 aa).

Histidine 23 functions as the Proton acceptor in the catalytic mechanism. 2 residues coordinate an anthocyanidin: histidine 23 and glutamine 88. Aspartate 123 serves as the catalytic Charge relay. UDP-alpha-D-glucose is bound at residue threonine 145. An anthocyanidin is bound at residue histidine 154. UDP-alpha-D-glucose contacts are provided by alanine 339, glutamine 341, histidine 356, tryptophan 359, asparagine 360, serine 361, and glutamate 364. Glycine 379 lines the an anthocyanidin pocket. Aspartate 380 and glutamine 381 together coordinate UDP-alpha-D-glucose.

Belongs to the UDP-glycosyltransferase family.

It carries out the reaction a flavonol + UDP-alpha-D-glucose = a flavonol 3-O-beta-D-glucoside + UDP + H(+). It catalyses the reaction quercetin + UDP-alpha-D-glucose = quercetin 3-O-beta-D-glucoside + UDP + H(+). It participates in flavonoid metabolism. Its function is as follows. Flavonol 3-O-glucosyltransferase that catalyzes the transfer of glucose from UDP-glucose to the 3-OH position of quercetin and kaempferol. Possesses high quercetin 3-O-glucosyltransferase activity in vitro. Catalyzes the glycosylation of anthocyanins from UDP-glucose. Also active in vitro on benzoates and benzoate derivatives. The sequence is that of Flavonol 3-O-glucosyltransferase from Arabidopsis thaliana (Mouse-ear cress).